A 458-amino-acid chain; its full sequence is tRNA modification GTPase MnmE (458 aa).

Arg32, Glu89, and Lys128 together coordinate (6S)-5-formyl-5,6,7,8-tetrahydrofolate. One can recognise a TrmE-type G domain in the interval 224–381 (GVRVVLAGRP…LCQRLKECAG (158 aa)). Residue Asn234 coordinates K(+). GTP is bound by residues 234–239 (NVGKSS), 253–259 (TDVPGTT), and 278–281 (DTAG). Residue Ser238 participates in Mg(2+) binding. 3 residues coordinate K(+): Thr253, Val255, and Thr258. Thr259 is a Mg(2+) binding site. Lys458 is a (6S)-5-formyl-5,6,7,8-tetrahydrofolate binding site.

This sequence belongs to the TRAFAC class TrmE-Era-EngA-EngB-Septin-like GTPase superfamily. TrmE GTPase family. As to quaternary structure, homodimer. Heterotetramer of two MnmE and two MnmG subunits. It depends on K(+) as a cofactor.

It is found in the cytoplasm. Functionally, exhibits a very high intrinsic GTPase hydrolysis rate. Involved in the addition of a carboxymethylaminomethyl (cmnm) group at the wobble position (U34) of certain tRNAs, forming tRNA-cmnm(5)s(2)U34. In Nitrosococcus oceani (strain ATCC 19707 / BCRC 17464 / JCM 30415 / NCIMB 11848 / C-107), this protein is tRNA modification GTPase MnmE.